The following is a 296-amino-acid chain: Phosphatidylserine decarboxylase proenzyme (296 aa).

Active-site charge relay system; for autoendoproteolytic cleavage activity residues include D100, H157, and S263. S263 acts as the Schiff-base intermediate with substrate; via pyruvic acid; for decarboxylase activity in catalysis. S263 carries the post-translational modification Pyruvic acid (Ser); by autocatalysis.

It belongs to the phosphatidylserine decarboxylase family. PSD-B subfamily. Prokaryotic type I sub-subfamily. In terms of assembly, heterodimer of a large membrane-associated beta subunit and a small pyruvoyl-containing alpha subunit. It depends on pyruvate as a cofactor. Post-translationally, is synthesized initially as an inactive proenzyme. Formation of the active enzyme involves a self-maturation process in which the active site pyruvoyl group is generated from an internal serine residue via an autocatalytic post-translational modification. Two non-identical subunits are generated from the proenzyme in this reaction, and the pyruvate is formed at the N-terminus of the alpha chain, which is derived from the carboxyl end of the proenzyme. The autoendoproteolytic cleavage occurs by a canonical serine protease mechanism, in which the side chain hydroxyl group of the serine supplies its oxygen atom to form the C-terminus of the beta chain, while the remainder of the serine residue undergoes an oxidative deamination to produce ammonia and the pyruvoyl prosthetic group on the alpha chain. During this reaction, the Ser that is part of the protease active site of the proenzyme becomes the pyruvoyl prosthetic group, which constitutes an essential element of the active site of the mature decarboxylase.

Its subcellular location is the cell membrane. It carries out the reaction a 1,2-diacyl-sn-glycero-3-phospho-L-serine + H(+) = a 1,2-diacyl-sn-glycero-3-phosphoethanolamine + CO2. Its pathway is phospholipid metabolism; phosphatidylethanolamine biosynthesis; phosphatidylethanolamine from CDP-diacylglycerol: step 2/2. Its function is as follows. Catalyzes the formation of phosphatidylethanolamine (PtdEtn) from phosphatidylserine (PtdSer). The polypeptide is Phosphatidylserine decarboxylase proenzyme (Actinobacillus pleuropneumoniae serotype 7 (strain AP76)).